Consider the following 196-residue polypeptide: Pyridoxal 5'-phosphate synthase subunit PdxT (196 aa).

47–49 contacts L-glutamine; sequence GES. The Nucleophile role is filled by Cys-79. Residues Arg-106 and 134-135 contribute to the L-glutamine site; that span reads IR. Active-site charge relay system residues include His-170 and Glu-172.

It belongs to the glutaminase PdxT/SNO family. In terms of assembly, in the presence of PdxS, forms a dodecamer of heterodimers. Only shows activity in the heterodimer.

It carries out the reaction aldehydo-D-ribose 5-phosphate + D-glyceraldehyde 3-phosphate + L-glutamine = pyridoxal 5'-phosphate + L-glutamate + phosphate + 3 H2O + H(+). The enzyme catalyses L-glutamine + H2O = L-glutamate + NH4(+). It functions in the pathway cofactor biosynthesis; pyridoxal 5'-phosphate biosynthesis. In terms of biological role, catalyzes the hydrolysis of glutamine to glutamate and ammonia as part of the biosynthesis of pyridoxal 5'-phosphate. The resulting ammonia molecule is channeled to the active site of PdxS. This is Pyridoxal 5'-phosphate synthase subunit PdxT from Bacillus anthracis (strain A0248).